We begin with the raw amino-acid sequence, 133 residues long: S-protein homolog 9 (133 aa).

The signal sequence occupies residues 1–20 (MNRLSCFLLVIGLCIGLSNA).

The protein belongs to the plant self-incompatibility (S1) protein family.

It is found in the secreted. This chain is S-protein homolog 9, found in Arabidopsis thaliana (Mouse-ear cress).